Reading from the N-terminus, the 367-residue chain is GDSL esterase/lipase At4g28780 (367 aa).

A signal peptide spans 1-28; it reads MSTFLLTWIIMTVALSVTLFLMPQQTNA. Serine 38 (nucleophile) is an active-site residue. Residue asparagine 119 is glycosylated (N-linked (GlcNAc...) asparagine). Catalysis depends on residues aspartate 328 and histidine 331. Asparagine 356 carries N-linked (GlcNAc...) asparagine glycosylation.

Belongs to the 'GDSL' lipolytic enzyme family.

The protein localises to the secreted. The chain is GDSL esterase/lipase At4g28780 from Arabidopsis thaliana (Mouse-ear cress).